The chain runs to 290 residues: MEWSLTQNKLLAFHRLMRTDKPIGALLLLWPTLWALWVATPGVPQLWILAVFVAGVWLMRAAGCVVNDYADRKFDGHVKRTANRPLPSGAVTEKEARALFVVLVLISFLLVLTLNTMTILLSIAALALAWVYPFMKRYTHLPQVVLGAAFGWSIPMAFAAVSESVPLSCWLMFLANILWAVAYDTQYAMVDRDDDVKIGIKSTAILFGQYDKLIIGILQIGVLALMAIIGELNGLGWGYYWSILVAGALFVYQQKLIANREREACFKAFMNNNYVGLVLFLGLAMSYWHF.

8 consecutive transmembrane segments (helical) span residues 23–43 (IGAL…TPGV), 46–66 (LWIL…GCVV), 99–119 (LFVV…TMTI), 141–161 (LPQV…FAAV), 163–183 (ESVP…AVAY), 213–233 (LIIG…GELN), 234–254 (GLGW…VYQQ), and 268–288 (AFMN…MSYW).

Belongs to the UbiA prenyltransferase family. Mg(2+) serves as cofactor.

The protein resides in the cell inner membrane. The catalysed reaction is all-trans-octaprenyl diphosphate + 4-hydroxybenzoate = 4-hydroxy-3-(all-trans-octaprenyl)benzoate + diphosphate. It participates in cofactor biosynthesis; ubiquinone biosynthesis. In terms of biological role, catalyzes the prenylation of para-hydroxybenzoate (PHB) with an all-trans polyprenyl group. Mediates the second step in the final reaction sequence of ubiquinone-8 (UQ-8) biosynthesis, which is the condensation of the polyisoprenoid side chain with PHB, generating the first membrane-bound Q intermediate 3-octaprenyl-4-hydroxybenzoate. The polypeptide is 4-hydroxybenzoate octaprenyltransferase (Escherichia coli O6:K15:H31 (strain 536 / UPEC)).